The primary structure comprises 259 residues: Small ribosomal subunit protein uS2 (259 aa).

The protein belongs to the universal ribosomal protein uS2 family.

This Dinoroseobacter shibae (strain DSM 16493 / NCIMB 14021 / DFL 12) protein is Small ribosomal subunit protein uS2.